Consider the following 504-residue polypeptide: MLPPKTFFEKVKEIIWPIERKELKLFIPMALMMLCILFNFGALRSIKDSLVVPSMGAEIISFLKLWLVLPACVIFTILYVKLSNKFNFEYVFYIIVGSFLLFFLFFAYIIYPNQEAYHPNNEIINSLITSYPNFKWFIKIASKWSYGLMYIFAELWSAVVINLMFWQFANHIFDTNKAKRFYPVLGMVGNIGLILAGSVLVFFSGNKIIDPELLPNSFDASVNLTSQTTEMLQPIMSIIVAAGVISMLLFRIINKSILTDSINVLDSKKVKAKTKTKLSVLESIKLVINSKYIGRIALLIICYGLLINIVEGPWKAKVKELYPSTIDYVHFMGRFNILMGISCVTFMIIGSNILRRLGWFFSALLTPIMLSITGLMFFIFIIFIEEIGSCFGNFNLLYAAIIVGAIQNILSKSSKYSLFDSTKEMAYIPLSLELRTKGKAAVEVIGTKFGKSLGAFIQSLIFIIIPTATFDSIIIYLLVIFIVMISLWIWDVVKLNKEYTELCK.

The next 12 helical transmembrane spans lie at 23-43 (LKLF…FGAL), 59-79 (IISF…TILY), 90-110 (YVFY…AYII), 146-166 (YGLM…LMFW), 183-203 (PVLG…LVFF), 230-250 (EMLQ…MLLF), 296-316 (IALL…PWKA), 329-349 (VHFM…FMII), 364-384 (LLTP…IIFI), 386-406 (EIGS…VGAI), 449-469 (FGKS…PTAT), and 473-493 (IIIY…WDVV).

The protein belongs to the ADP/ATP translocase tlc family.

Its subcellular location is the cell membrane. Its function is as follows. Provides the rickettsial cell with host ATP in exchange for rickettsial ADP. This is an obligate exchange system. This energy acquiring activity is an important component of rickettsial parasitism. The protein is ADP,ATP carrier protein 3 (tlcC) of Rickettsia bellii (strain RML369-C).